Reading from the N-terminus, the 752-residue chain is NAD(P)H-quinone oxidoreductase subunit 5, chloroplastic (752 aa).

A run of 16 helical transmembrane segments spans residues 9–29 (WIIPFVTLPVPMLIGAGLLLF), 40–60 (WAFPSVFLLSIVMIFSIDLSI), 89–109 (IDPLTSILSVLITTVGILVLF), 125–145 (FAYMSFFTTSMLGLVTSSNLI), 147–167 (IYIFWELVGVCSYLLIGFWFT), 185–205 (GDFGLLLGILGLYWITGSFEF), 219–239 (NQVNFLFVTLCAVLLFSGAIA), 258–278 (TPISALIHAATMVAAGIFLVA), 280–300 (LFPLFVIIPFIMNLIALIGII), 327–347 (LGYMMLALGMGSYRAALFHLI), 354–374 (ALLFLGSGSIIHSMEAILGYS), 396–416 (TAFLLGTLSLCGIPPFACFWS), 425–445 (WLYSPIFAIIACFTAGLTAFY), 549–569 (LFPMLILVLFTLFIGAIGIPF), 608–628 (FVTNATFSASIAFFGIFIASF), and 728–748 (FYLLFYLFYALIFLLIYYSVY).

This sequence belongs to the complex I subunit 5 family. In terms of assembly, NDH is composed of at least 16 different subunits, 5 of which are encoded in the nucleus.

The protein localises to the plastid. The protein resides in the chloroplast thylakoid membrane. It catalyses the reaction a plastoquinone + NADH + (n+1) H(+)(in) = a plastoquinol + NAD(+) + n H(+)(out). The enzyme catalyses a plastoquinone + NADPH + (n+1) H(+)(in) = a plastoquinol + NADP(+) + n H(+)(out). Functionally, NDH shuttles electrons from NAD(P)H:plastoquinone, via FMN and iron-sulfur (Fe-S) centers, to quinones in the photosynthetic chain and possibly in a chloroplast respiratory chain. The immediate electron acceptor for the enzyme in this species is believed to be plastoquinone. Couples the redox reaction to proton translocation, and thus conserves the redox energy in a proton gradient. The chain is NAD(P)H-quinone oxidoreductase subunit 5, chloroplastic (ndhF) from Manihot esculenta (Cassava).